The sequence spans 282 residues: Large ribosomal subunit protein uL2 (282 aa).

2 disordered regions span residues 31–55 (KRLTKPVRKSGGRNAHGKVTTRHIG) and 223–282 (LAMN…NTQR). Composition is skewed to basic residues over residues 34–55 (TKPVRKSGGRNAHGKVTTRHIG) and 270–282 (VTRRRPGVRNTQR).

Belongs to the universal ribosomal protein uL2 family. As to quaternary structure, part of the 50S ribosomal subunit. Forms a bridge to the 30S subunit in the 70S ribosome.

Functionally, one of the primary rRNA binding proteins. Required for association of the 30S and 50S subunits to form the 70S ribosome, for tRNA binding and peptide bond formation. It has been suggested to have peptidyltransferase activity; this is somewhat controversial. Makes several contacts with the 16S rRNA in the 70S ribosome. This Anaeromyxobacter dehalogenans (strain 2CP-C) protein is Large ribosomal subunit protein uL2.